Reading from the N-terminus, the 235-residue chain is Purine nucleoside phosphorylase DeoD-type (235 aa).

Histidine 4 is a binding site for a purine D-ribonucleoside. Phosphate contacts are provided by residues glycine 20, arginine 24, arginine 43, and 87 to 90 (RVGT). A purine D-ribonucleoside-binding positions include 180 to 182 (EME) and 204 to 205 (SD). Aspartate 205 acts as the Proton donor in catalysis.

This sequence belongs to the PNP/UDP phosphorylase family. In terms of assembly, homohexamer; trimer of homodimers.

The catalysed reaction is a purine D-ribonucleoside + phosphate = a purine nucleobase + alpha-D-ribose 1-phosphate. It carries out the reaction a purine 2'-deoxy-D-ribonucleoside + phosphate = a purine nucleobase + 2-deoxy-alpha-D-ribose 1-phosphate. In terms of biological role, catalyzes the reversible phosphorolytic breakdown of the N-glycosidic bond in the beta-(deoxy)ribonucleoside molecules, with the formation of the corresponding free purine bases and pentose-1-phosphate. In Oceanobacillus iheyensis (strain DSM 14371 / CIP 107618 / JCM 11309 / KCTC 3954 / HTE831), this protein is Purine nucleoside phosphorylase DeoD-type.